Consider the following 195-residue polypeptide: Probable GTP-binding protein EngB (195 aa).

Residues 22–195 (GRPEVALAGR…WAALLPFLTE (174 aa)) enclose the EngB-type G domain. GTP-binding positions include 30–37 (GRSNVGKS), 57–61 (GKTQT), 75–78 (DVPG), 142–145 (TKAD), and 174–176 (FSS). Mg(2+) contacts are provided by serine 37 and threonine 59.

This sequence belongs to the TRAFAC class TrmE-Era-EngA-EngB-Septin-like GTPase superfamily. EngB GTPase family. Mg(2+) is required as a cofactor.

Necessary for normal cell division and for the maintenance of normal septation. In Geobacillus thermodenitrificans (strain NG80-2), this protein is Probable GTP-binding protein EngB.